The primary structure comprises 139 residues: ATP synthase epsilon chain (139 aa).

The protein belongs to the ATPase epsilon chain family. In terms of assembly, F-type ATPases have 2 components, CF(1) - the catalytic core - and CF(0) - the membrane proton channel. CF(1) has five subunits: alpha(3), beta(3), gamma(1), delta(1), epsilon(1). CF(0) has three main subunits: a, b and c.

The protein resides in the cell membrane. Functionally, produces ATP from ADP in the presence of a proton gradient across the membrane. The chain is ATP synthase epsilon chain from Enterococcus faecalis (strain ATCC 700802 / V583).